The chain runs to 196 residues: Kunitz trypsin inhibitor 5 (196 aa).

An N-terminal signal peptide occupies residues 1–19 (MSSLLYIFLLLAVFISHRG). A disulfide bridge links Cys-156 with Cys-167.

Belongs to the protease inhibitor I3 (leguminous Kunitz-type inhibitor) family.

It localises to the endoplasmic reticulum. Its function is as follows. Can inhibit both serine proteases and cysteine proteases. May be involved in the modulation of the proteases that participate in the hydrolysis of dietary proteins in the gut of spider mites. This chain is Kunitz trypsin inhibitor 5, found in Arabidopsis thaliana (Mouse-ear cress).